A 327-amino-acid chain; its full sequence is Endo-1,4-beta-xylanase A (327 aa).

A GH10 domain is found at 1-323 (AASGLEAAMK…KPSYTSTLNT (323 aa)). Cys81 and Cys123 are joined by a disulfide. Asn101 carries an N-linked (GlcNAc...) asparagine glycan. Glu131 functions as the Proton donor in the catalytic mechanism. The active-site Nucleophile is Glu245. Residues Cys273 and Cys279 are joined by a disulfide bond.

The protein belongs to the glycosyl hydrolase 10 (cellulase F) family. As to quaternary structure, monomer.

The protein localises to the secreted. It localises to the extracellular space. The catalysed reaction is Endohydrolysis of (1-&gt;4)-beta-D-xylosidic linkages in xylans.. It participates in glycan degradation; xylan degradation. Its function is as follows. Catalyzes the hydrolysis of the internal glycosidic bonds in heteroxylans, releasing mainly xylobiose and xylotriose. Most active on oat-spelt xylan. This is Endo-1,4-beta-xylanase A from Fusarium oxysporum f. sp. lycopersici (strain 4287 / CBS 123668 / FGSC 9935 / NRRL 34936) (Fusarium vascular wilt of tomato).